A 400-amino-acid polypeptide reads, in one-letter code: Phosphoglycerate kinase (400 aa).

Residues 23-25 (DLN), R38, 61-64 (HFGR), R120, and R153 contribute to the substrate site. ATP-binding positions include K203, E325, and 355–358 (GGDT).

It belongs to the phosphoglycerate kinase family. As to quaternary structure, monomer.

Its subcellular location is the cytoplasm. The enzyme catalyses (2R)-3-phosphoglycerate + ATP = (2R)-3-phospho-glyceroyl phosphate + ADP. The protein operates within carbohydrate degradation; glycolysis; pyruvate from D-glyceraldehyde 3-phosphate: step 2/5. This is Phosphoglycerate kinase from Methylorubrum extorquens (strain CM4 / NCIMB 13688) (Methylobacterium extorquens).